A 127-amino-acid chain; its full sequence is Cytochrome c2 (127 aa).

The first 20 residues, 1–20 (MRKLVFGLFVLAASVAPAAA), serve as a signal peptide directing secretion. Gln-21 is modified (pyrrolidone carboxylic acid). Cys-33, Cys-36, His-37, and Met-99 together coordinate heme c.

Belongs to the cytochrome c family. In terms of processing, binds 1 heme c group covalently per subunit.

In terms of biological role, cytochrome c2 is found mainly in purple, non-sulfur, photosynthetic bacteria where it functions as the electron donor to the oxidized bacteriochlorophyll in the photophosphorylation pathway. However, it may also have a role in the respiratory chain and is found in some non-photosynthetic bacteria. The chain is Cytochrome c2 (cycA) from Blastochloris viridis (Rhodopseudomonas viridis).